A 120-amino-acid polypeptide reads, in one-letter code: U13-lycotoxin-Ls1a (120 aa).

Positions 1–16 (MKILFVLISILYAVYC) are cleaved as a signal peptide. A propeptide spanning residues 17 to 54 (FSSEEDVDSAYLANELEPVEDINSEQYAALEPKEEQGR) is cleaved from the precursor. 4 disulfide bridges follow: Cys56-Cys70, Cys63-Cys76, Cys69-Cys87, and Cys78-Cys85. Residues 56–95 (CADMGQDCKDDCDCCLNIATCNCWFGRYFCSCTFGDYQTC) form the Agouti domain.

It belongs to the neurotoxin 05 (agouti) family. Post-translationally, contains 6 disulfide bonds. Expressed by the venom gland.

It is found in the secreted. In Lycosa singoriensis (Wolf spider), this protein is U13-lycotoxin-Ls1a.